The sequence spans 132 residues: Small ribosomal subunit protein uS8 (132 aa).

The protein belongs to the universal ribosomal protein uS8 family. In terms of assembly, part of the 30S ribosomal subunit. Contacts proteins S5 and S12.

In terms of biological role, one of the primary rRNA binding proteins, it binds directly to 16S rRNA central domain where it helps coordinate assembly of the platform of the 30S subunit. The chain is Small ribosomal subunit protein uS8 from Lacticaseibacillus casei (strain BL23) (Lactobacillus casei).